Here is a 956-residue protein sequence, read N- to C-terminus: Plasma membrane ATPase 1 (956 aa).

The Cytoplasmic segment spans residues 1 to 65 (MAEKPEVLDA…EKKESKFLKF (65 aa)). Residues 66–85 (LGFMWNPLSWVMEAAAIMAI) form a helical membrane-spanning segment. Residues 86–97 (ALANGGGKPPDW) are Extracellular-facing. A helical membrane pass occupies residues 98 to 118 (QDFVGIITLLIINSTISFIEE). Residues 119–247 (NNAGNAAAAL…GHFQKVLTAI (129 aa)) lie on the Cytoplasmic side of the membrane. The helical transmembrane segment at 248–268 (GNFCICSIAVGMIIEIIVMYP) threads the bilayer. Topologically, residues 269-277 (IQHRKYRPG) are extracellular. Residues 278–295 (IDNLLVLLIGGIPIAMPT) traverse the membrane as a helical segment. At 296–646 (VLSVTMAIGS…LTSRAIFQRM (351 aa)) the chain is on the cytoplasmic side. D333 acts as the 4-aspartylphosphate intermediate in catalysis. Mg(2+)-binding residues include D592 and D596. The chain crosses the membrane as a helical span at residues 647 to 666 (KNYTIYAVSITIRIVLGFML). The Extracellular portion of the chain corresponds to 667–674 (LALIWKFD). The helical transmembrane segment at 675–697 (FPPFMVLIIAILNDGTIMTISKD) threads the bilayer. Residues 698–713 (RVKPSPLPDSWKLAEI) lie on the Cytoplasmic side of the membrane. A helical membrane pass occupies residues 714 to 734 (FTTGVVLGGYLAMMTVIFFWA). Residues 735 to 759 (AYKTNFFPRIFGVSTLEKTATDDFR) are Extracellular-facing. A helical membrane pass occupies residues 760–780 (KLASAIYLQVSTISQALIFVT). The Cytoplasmic segment spans residues 781–792 (RSRSWSFVERPG). The chain crosses the membrane as a helical span at residues 793 to 813 (LLLVFAFFVAQLVATLIAVYA). Over 814-821 (NWSFAAIE) the chain is Extracellular. The chain crosses the membrane as a helical span at residues 822–842 (GIGWGWAGVIWLYNIVTYIPL). The Cytoplasmic segment spans residues 843 to 956 (DLIKFLIRYA…IETIQQSYTV (114 aa)).

It belongs to the cation transport ATPase (P-type) (TC 3.A.3) family. Type IIIA subfamily. As to quaternary structure, possibly exists as a homodimer or a homotrimer.

The protein resides in the cell membrane. It catalyses the reaction ATP + H2O + H(+)(in) = ADP + phosphate + 2 H(+)(out). Its function is as follows. The plasma membrane ATPase of plants and fungi is a hydrogen ion pump. The proton gradient it generates drives the active transport of nutrients by H(+)-symport. The resulting external acidification and/or internal alkinization may mediate growth responses. This is Plasma membrane ATPase 1 (LHA1) from Solanum lycopersicum (Tomato).